The following is a 138-amino-acid chain: von Willebrand factor C domain-containing protein 2-like (138 aa).

The first 21 residues, 1–21 (MALHIHEACILLLVIPGLVTS), serve as a signal peptide directing secretion. One can recognise a VWFC domain in the interval 51-110 (KGCVDDSGFVYKLGERFFPGHSNCPCVCALDGPVCDQPECPKIHPKCTKVEHNGCCPECK).

In terms of assembly, peripherally associated with AMPAR complex. AMPAR complex consists of an inner core made of 4 pore-forming GluA/GRIA proteins (GRIA1, GRIA2, GRIA3 and GRIA4) and 4 major auxiliary subunits arranged in a twofold symmetry. One of the two pairs of distinct binding sites is occupied either by CNIH2, CNIH3 or CACNG2, CACNG3. The other harbors CACNG2, CACNG3, CACNG4, CACNG8 or GSG1L. This inner core of AMPAR complex is complemented by outer core constituents binding directly to the GluA/GRIA proteins at sites distinct from the interaction sites of the inner core constituents. Outer core constituents include at least PRRT1, PRRT2, CKAMP44/SHISA9, FRRS1L and NRN1. The proteins of the inner and outer core serve as a platform for other, more peripherally associated AMPAR constituents, including VWC2L. Alone or in combination, these auxiliary subunits control the gating and pharmacology of the AMPAR complex and profoundly impact their biogenesis and protein processing.

Its subcellular location is the secreted. It is found in the synapse. In terms of biological role, may play a role in neurogenesis. May play a role in bone differentiation and matrix mineralization. The chain is von Willebrand factor C domain-containing protein 2-like (VWC2L) from Macaca fascicularis (Crab-eating macaque).